A 444-amino-acid chain; its full sequence is Glycogen synthase (444 aa).

Arg15 contacts ADP-alpha-D-glucose.

The protein belongs to the glycosyltransferase 1 family. Bacterial/plant glycogen synthase subfamily.

It catalyses the reaction [(1-&gt;4)-alpha-D-glucosyl](n) + ADP-alpha-D-glucose = [(1-&gt;4)-alpha-D-glucosyl](n+1) + ADP + H(+). It participates in glycan biosynthesis; glycogen biosynthesis. Its function is as follows. Synthesizes alpha-1,4-glucan chains using ADP-glucose. In Deinococcus radiodurans (strain ATCC 13939 / DSM 20539 / JCM 16871 / CCUG 27074 / LMG 4051 / NBRC 15346 / NCIMB 9279 / VKM B-1422 / R1), this protein is Glycogen synthase.